The following is a 130-amino-acid chain: DUF35 domain-containing scaffold protein (130 aa).

Residues Cys20, Cys23, Cys34, and Cys37 each contribute to the Zn(2+) site.

The protein belongs to the scaffold protein DUF35 family. As to quaternary structure, interacts with acetoacetyl-CoA thiolase and HMG-CoA synthase (HMGCS) that catalyzes the first and second step in the mevalonate pathway, respectively.

In terms of biological role, functions as a scaffold to connect the acetoacetyl-CoA thiolase and HMG-CoA synthase (HMGCS) dimers in the channeling thiolase/HMGCS complex, which allows for efficient coupling of the endergonic thiolase reaction with the exergonic HMGCS reaction. This Methanothermococcus thermolithotrophicus (Methanococcus thermolithotrophicus) protein is DUF35 domain-containing scaffold protein.